The following is a 187-amino-acid chain: 1,6-anhydro-N-acetylmuramyl-L-alanine amidase AmpD (187 aa).

The N-acetylmuramoyl-L-alanine amidase domain maps to 30–167 (LLVVHNISLP…APERKTDPGP (138 aa)). A Zn(2+)-binding site is contributed by His-34. Glu-116 acts as the Proton acceptor in catalysis. Positions 154 and 164 each coordinate Zn(2+).

The protein belongs to the N-acetylmuramoyl-L-alanine amidase 2 family. Zn(2+) serves as cofactor.

The protein localises to the cytoplasm. It carries out the reaction Hydrolyzes the link between N-acetylmuramoyl residues and L-amino acid residues in certain cell-wall glycopeptides.. With respect to regulation, amidase activity is inhibited by metal chelators such as EDTA, dipicolinic acid or 1,10-phenanthroline. Functionally, involved in cell wall peptidoglycan recycling. Specifically cleaves the amide bond between the lactyl group of N-acetylmuramic acid and the alpha-amino group of the L-alanine in degradation products containing an anhydro N-acetylmuramyl moiety. Is also involved in beta-lactamase induction. This is 1,6-anhydro-N-acetylmuramyl-L-alanine amidase AmpD from Citrobacter freundii.